Here is an 87-residue protein sequence, read N- to C-terminus: Toxin Cll3 (87 aa).

The first 19 residues, methionine 1–alanine 19, serve as a signal peptide directing secretion. Positions lysine 20–tyrosine 85 constitute an LCN-type CS-alpha/beta domain. Intrachain disulfides connect cysteine 31–cysteine 84, cysteine 35–cysteine 60, cysteine 44–cysteine 65, and cysteine 48–cysteine 67. Tyrosine 85 carries the post-translational modification Tyrosine amide.

The protein belongs to the long (4 C-C) scorpion toxin superfamily. Sodium channel inhibitor family. Beta subfamily. In terms of tissue distribution, expressed by the venom gland.

It is found in the secreted. Functionally, beta toxins bind voltage-independently at site-4 of sodium channels (Nav) and shift the voltage of activation toward more negative potentials thereby affecting sodium channel activation and promoting spontaneous and repetitive firing. The sequence is that of Toxin Cll3 from Centruroides limpidus (Mexican scorpion).